The following is a 258-amino-acid chain: Indole-3-glycerol phosphate synthase (258 aa).

Belongs to the TrpC family.

It carries out the reaction 1-(2-carboxyphenylamino)-1-deoxy-D-ribulose 5-phosphate + H(+) = (1S,2R)-1-C-(indol-3-yl)glycerol 3-phosphate + CO2 + H2O. It participates in amino-acid biosynthesis; L-tryptophan biosynthesis; L-tryptophan from chorismate: step 4/5. The protein is Indole-3-glycerol phosphate synthase of Campylobacter jejuni subsp. jejuni serotype O:23/36 (strain 81-176).